The sequence spans 101 residues: Putative pterin-4-alpha-carbinolamine dehydratase (101 aa).

It belongs to the pterin-4-alpha-carbinolamine dehydratase family.

The catalysed reaction is (4aS,6R)-4a-hydroxy-L-erythro-5,6,7,8-tetrahydrobiopterin = (6R)-L-erythro-6,7-dihydrobiopterin + H2O. The chain is Putative pterin-4-alpha-carbinolamine dehydratase from Rhizobium rhizogenes (strain K84 / ATCC BAA-868) (Agrobacterium radiobacter).